The following is a 251-amino-acid chain: Myozenin-3 (251 aa).

A Phosphoserine modification is found at S31. The tract at residues 50–67 (LLFQKRQRRVQKFTFELA) is binding to ACTN2, PPP3CA and TCAP. The interval 67 to 110 (AASQRAMLAGSARRKVTGTAESGTVANANGPEGPNYRSELHIFP) is binding to FLNC. The segment at 79–102 (RRKVTGTAESGTVANANGPEGPNY) is disordered. The interval 186 to 207 (PSPNDYRNFNKTPVPFGGPLVG) is binding to ACTN2.

It belongs to the myozenin family. In terms of assembly, interacts with ACTN2, LDB3, FLNC, PPP3CA and TCAP. Expressed specifically in skeletal muscle. Not detected in heart.

Its subcellular location is the cytoplasm. It is found in the myofibril. It localises to the sarcomere. The protein localises to the z line. In terms of biological role, myozenins may serve as intracellular binding proteins involved in linking Z line proteins such as alpha-actinin, gamma-filamin, TCAP/telethonin, LDB3/ZASP and localizing calcineurin signaling to the sarcomere. Plays an important role in the modulation of calcineurin signaling. May play a role in myofibrillogenesis. The chain is Myozenin-3 from Homo sapiens (Human).